The following is a 318-amino-acid chain: uncharacterized protein (318 aa).

A compositionally biased stretch (basic and acidic residues) spans 1–22 (MKASQERSEARRTAHSVKEKKY). Disordered stretches follow at residues 1–29 (MKAS…ASPR) and 293–318 (DDGD…DDDE).

This is an uncharacterized protein from Ictalurid herpesvirus 1 (strain Auburn) (IcHV-1).